The chain runs to 593 residues: Proteasome-associated ATPase (593 aa).

Residues 5–94 (DDADSRAARW…KEEIDRLAQP (90 aa)) are a coiled coil. 281-286 (GCGKTL) is a binding site for ATP. Residues 574–593 (GKGADAGRSIETASNTGQYL) form a disordered region. A compositionally biased stretch (polar residues) spans 584-593 (ETASNTGQYL). Positions 592-593 (YL) are docks into pockets in the proteasome alpha-ring.

Belongs to the AAA ATPase family. Homohexamer. Assembles into a hexameric ring structure that caps the 20S proteasome core. Strongly interacts with the prokaryotic ubiquitin-like protein Pup through a hydrophobic interface; the interacting region of ARC lies in its N-terminal coiled-coil domain. There is one Pup binding site per ARC hexamer ring. Upon ATP-binding, the C-terminus of ARC interacts with the alpha-rings of the proteasome core, possibly by binding to the intersubunit pockets.

The protein operates within protein degradation; proteasomal Pup-dependent pathway. Its function is as follows. ATPase which is responsible for recognizing, binding, unfolding and translocation of pupylated proteins into the bacterial 20S proteasome core particle. May be essential for opening the gate of the 20S proteasome via an interaction with its C-terminus, thereby allowing substrate entry and access to the site of proteolysis. Thus, the C-termini of the proteasomal ATPase may function like a 'key in a lock' to induce gate opening and therefore regulate proteolysis. This chain is Proteasome-associated ATPase, found in Salinispora arenicola (strain CNS-205).